We begin with the raw amino-acid sequence, 431 residues long: Keratin, type I cytoskeletal 40 (431 aa).

The interval 1–89 (MTSDCSSTHC…CEDGVFTSNE (89 aa)) is head. The IF rod domain maps to 89–400 (EKETMQFLND…GLLDSEDSRL (312 aa)). A coil 1A region spans residues 90-124 (KETMQFLNDRLASYLEKVRSLEETNAELESRIQEQ). The tract at residues 125–135 (CEQDIPMVCPD) is linker 1. Residues 136–236 (YQRYFNTIED…HEEEVNLLRE (101 aa)) form a coil 1B region. The tract at residues 237–252 (QLGDRLSVELDTAPTL) is linker 12. Positions 253-396 (DLNRVLDEMR…NTYWGLLDSE (144 aa)) are coil 2. The interval 397 to 431 (DSRLSCSPCSTTCTSSNTCEPCSAYVICTVENCCL) is tail.

It belongs to the intermediate filament family. In terms of assembly, heterotetramer of two type I and two type II keratins. As to expression, expressed in skin and scalp. Also very weakly expressed in tongue, breast, colon and small intestine. In the hair follicle, it is specifically present in the upper hair cuticle. Not present in the upper cortex (at protein level).

Its function is as follows. May play a role in late hair differentiation. The protein is Keratin, type I cytoskeletal 40 (KRT40) of Homo sapiens (Human).